Here is a 270-residue protein sequence, read N- to C-terminus: Urease accessory protein UreD (270 aa).

Belongs to the UreD family. In terms of assembly, ureD, UreF and UreG form a complex that acts as a GTP-hydrolysis-dependent molecular chaperone, activating the urease apoprotein by helping to assemble the nickel containing metallocenter of UreC. The UreE protein probably delivers the nickel.

Its subcellular location is the cytoplasm. In terms of biological role, required for maturation of urease via the functional incorporation of the urease nickel metallocenter. The chain is Urease accessory protein UreD from Microcystis aeruginosa (strain NIES-843 / IAM M-2473).